The following is a 157-amino-acid chain: 2-C-methyl-D-erythritol 2,4-cyclodiphosphate synthase (157 aa).

Positions 9 and 11 each coordinate a divalent metal cation. 4-CDP-2-C-methyl-D-erythritol 2-phosphate-binding positions include 9 to 11 (DVH) and 35 to 36 (HS). A divalent metal cation is bound at residue His-43. Residues 57-59 (DIG), 62-66 (FPDTD), 101-107 (AEKPKMA), 133-136 (TTTE), Phe-140, and Arg-143 contribute to the 4-CDP-2-C-methyl-D-erythritol 2-phosphate site.

This sequence belongs to the IspF family. Homotrimer. A divalent metal cation serves as cofactor.

It carries out the reaction 4-CDP-2-C-methyl-D-erythritol 2-phosphate = 2-C-methyl-D-erythritol 2,4-cyclic diphosphate + CMP. It functions in the pathway isoprenoid biosynthesis; isopentenyl diphosphate biosynthesis via DXP pathway; isopentenyl diphosphate from 1-deoxy-D-xylulose 5-phosphate: step 4/6. Functionally, involved in the biosynthesis of isopentenyl diphosphate (IPP) and dimethylallyl diphosphate (DMAPP), two major building blocks of isoprenoid compounds. Catalyzes the conversion of 4-diphosphocytidyl-2-C-methyl-D-erythritol 2-phosphate (CDP-ME2P) to 2-C-methyl-D-erythritol 2,4-cyclodiphosphate (ME-CPP) with a corresponding release of cytidine 5-monophosphate (CMP). This chain is 2-C-methyl-D-erythritol 2,4-cyclodiphosphate synthase, found in Listeria innocua serovar 6a (strain ATCC BAA-680 / CLIP 11262).